The chain runs to 209 residues: 3-demethoxyubiquinol 3-hydroxylase (209 aa).

Fe cation contacts are provided by E58, E88, H91, E140, E172, and H175.

It belongs to the COQ7 family. Fe cation serves as cofactor.

The protein resides in the cell membrane. The enzyme catalyses a 5-methoxy-2-methyl-3-(all-trans-polyprenyl)benzene-1,4-diol + AH2 + O2 = a 3-demethylubiquinol + A + H2O. Its pathway is cofactor biosynthesis; ubiquinone biosynthesis. Catalyzes the hydroxylation of 2-nonaprenyl-3-methyl-6-methoxy-1,4-benzoquinol during ubiquinone biosynthesis. The protein is 3-demethoxyubiquinol 3-hydroxylase of Polaromonas sp. (strain JS666 / ATCC BAA-500).